We begin with the raw amino-acid sequence, 620 residues long: Glutathione-regulated potassium-efflux system protein KefC (620 aa).

Transmembrane regions (helical) follow at residues 4-24 (HTLI…PIAV), 26-46 (LGLG…PWGL), 54-74 (SILH…GLEL), 90-110 (GALQ…LLGL), 114-134 (VAEL…MQAM), 149-169 (FAVL…IPLL), 178-198 (MGAF…VVLL), 218-238 (VFSA…EEVG), 270-290 (GLLL…GTLI), 294-314 (LRIV…LWLI), 327-347 (WFAV…GAAQ), and 359-379 (SLTL…VILN). Positions 399 to 518 (QPRVIIAGFG…AGVEKPERET (120 aa)) constitute an RCK N-terminal domain. A disordered region spans residues 597 to 620 (GWQGTEEGKHTGNMADEPETKPSS).

The protein belongs to the monovalent cation:proton antiporter 2 (CPA2) transporter (TC 2.A.37) family. KefC subfamily. Homodimer. Interacts with the regulatory subunit KefF.

Its subcellular location is the cell inner membrane. Its function is as follows. Pore-forming subunit of a potassium efflux system that confers protection against electrophiles. Catalyzes K(+)/H(+) antiport. The chain is Glutathione-regulated potassium-efflux system protein KefC from Escherichia coli O45:K1 (strain S88 / ExPEC).